A 304-amino-acid chain; its full sequence is Probable 5-dehydro-4-deoxyglucarate dehydratase (304 aa).

This sequence belongs to the DapA family.

It carries out the reaction 5-dehydro-4-deoxy-D-glucarate + H(+) = 2,5-dioxopentanoate + CO2 + H2O. It participates in carbohydrate acid metabolism; D-glucarate degradation; 2,5-dioxopentanoate from D-glucarate: step 2/2. The polypeptide is Probable 5-dehydro-4-deoxyglucarate dehydratase (Rhodococcus jostii (strain RHA1)).